We begin with the raw amino-acid sequence, 126 residues long: Fatty acid-binding protein 1, liver (126 aa).

It belongs to the calycin superfamily. Fatty-acid binding protein (FABP) family.

The protein localises to the cytoplasm. In terms of biological role, binds free fatty acids and their coenzyme A derivatives, bilirubin, and some other small molecules in the cytoplasm. May be involved in intracellular lipid transport. The specificity of axolotl L-FABP differs from that of LB-FABP. The chain is Fatty acid-binding protein 1, liver from Ambystoma mexicanum (Axolotl).